A 193-amino-acid polypeptide reads, in one-letter code: dCTP deaminase, dUMP-forming (193 aa).

DCTP contacts are provided by residues 101 to 106 (KSSLGR), aspartate 119, 127 to 129 (TLE), glutamine 148, tyrosine 162, and glutamine 174. Glutamate 129 serves as the catalytic Proton donor/acceptor. The disordered stretch occupies residues 162–184 (YGSKGTGSHYQGQRGPTPSRSYE). Positions 167–183 (TGSHYQGQRGPTPSRSY) are enriched in polar residues.

It belongs to the dCTP deaminase family. Homotrimer.

The catalysed reaction is dCTP + 2 H2O = dUMP + NH4(+) + diphosphate. Its pathway is pyrimidine metabolism; dUMP biosynthesis; dUMP from dCTP: step 1/1. Bifunctional enzyme that catalyzes both the deamination of dCTP to dUTP and the hydrolysis of dUTP to dUMP without releasing the toxic dUTP intermediate. The sequence is that of dCTP deaminase, dUMP-forming from Bifidobacterium longum (strain DJO10A).